A 495-amino-acid chain; its full sequence is Divinyl ether synthase CYP74M3 (495 aa).

Residue C446 participates in heme binding.

It belongs to the cytochrome P450 family. Requires heme as cofactor.

It catalyses the reaction (13S)-hydroperoxy-(9Z,11E)-octadecadienoate = etheroleate + H2O. The catalysed reaction is (13S)-hydroperoxy-(9Z,11E,15Z)-octadecatrienoate = etherolenate + H2O. The protein operates within lipid metabolism; oxylipin biosynthesis. Its function is as follows. Divinyl ether synthase involved in oxylipin biosynthesis. Catalyzes the conversion of (13S)-hydroperoxy-(9Z,11E)-octadecadienoate (13-HPOD) to etheroleate and (13S)-hydroperoxy-(9Z,11E,15Z)-octadecatrienoate (13-HPOT) to etherolenate. Has no activity with the corresponding 9-hydroperoxides (9-HPOD and 9-HPOT). The chain is Divinyl ether synthase CYP74M3 from Selaginella moellendorffii (Spikemoss).